A 264-amino-acid chain; its full sequence is S-adenosylmethionine decarboxylase proenzyme (264 aa).

The Schiff-base intermediate with substrate; via pyruvic acid role is filled by Ser-113. Pyruvic acid (Ser); by autocatalysis is present on Ser-113. Catalysis depends on His-118, which acts as the Proton acceptor; for processing activity. Cys-141 functions as the Proton donor; for catalytic activity in the catalytic mechanism.

Belongs to the prokaryotic AdoMetDC family. Type 2 subfamily. As to quaternary structure, heterooctamer of four alpha and four beta chains arranged as a tetramer of alpha/beta heterodimers. Pyruvate serves as cofactor. Post-translationally, is synthesized initially as an inactive proenzyme. Formation of the active enzyme involves a self-maturation process in which the active site pyruvoyl group is generated from an internal serine residue via an autocatalytic post-translational modification. Two non-identical subunits are generated from the proenzyme in this reaction, and the pyruvate is formed at the N-terminus of the alpha chain, which is derived from the carboxyl end of the proenzyme. The post-translation cleavage follows an unusual pathway, termed non-hydrolytic serinolysis, in which the side chain hydroxyl group of the serine supplies its oxygen atom to form the C-terminus of the beta chain, while the remainder of the serine residue undergoes an oxidative deamination to produce ammonia and the pyruvoyl group blocking the N-terminus of the alpha chain.

It catalyses the reaction S-adenosyl-L-methionine + H(+) = S-adenosyl 3-(methylsulfanyl)propylamine + CO2. Its pathway is amine and polyamine biosynthesis; S-adenosylmethioninamine biosynthesis; S-adenosylmethioninamine from S-adenosyl-L-methionine: step 1/1. Its function is as follows. Catalyzes the decarboxylation of S-adenosylmethionine to S-adenosylmethioninamine (dcAdoMet), the propylamine donor required for the synthesis of the polyamines spermine and spermidine from the diamine putrescine. The polypeptide is S-adenosylmethionine decarboxylase proenzyme (Pseudomonas syringae pv. tomato (strain ATCC BAA-871 / DC3000)).